A 451-amino-acid polypeptide reads, in one-letter code: uncharacterized protein (451 aa).

The HD domain occupies Arg-50 to Leu-147.

This is an uncharacterized protein from Methanocaldococcus jannaschii (strain ATCC 43067 / DSM 2661 / JAL-1 / JCM 10045 / NBRC 100440) (Methanococcus jannaschii).